The following is a 241-amino-acid chain: 1-Cys peroxiredoxin (241 aa).

Positions 33–189 constitute a Thioredoxin domain; the sequence is LRIGDVVPDF…IIRILDSFQL (157 aa). Catalysis depends on C75, which acts as the Cysteine sulfenic acid (-SOH) intermediate.

Belongs to the peroxiredoxin family. Prx6 subfamily. As to quaternary structure, homodimer.

It carries out the reaction a hydroperoxide + [thioredoxin]-dithiol = an alcohol + [thioredoxin]-disulfide + H2O. Functionally, thiol-specific peroxidase that catalyzes the reduction of hydrogen peroxide and organic hydroperoxides to water and alcohols, respectively. Plays a role in cell protection against oxidative stress by detoxifying peroxides. This is 1-Cys peroxiredoxin from Dictyostelium discoideum (Social amoeba).